Here is a 76-residue protein sequence, read N- to C-terminus: uncharacterized protein (76 aa).

The next 2 membrane-spanning stretches (helical) occupy residues 9-29 and 45-65; these read AIGI…LQAV and LLMI…FLDY.

The protein resides in the cell membrane. This is an uncharacterized protein from Bacillus subtilis (strain 168).